The primary structure comprises 700 residues: Acetyl-coenzyme A carboxylase carboxyl transferase subunit beta, chloroplastic (700 aa).

Zn(2+)-binding residues include Cys34, Cys37, Cys53, and Cys56. The segment at 34–56 adopts a C4-type zinc-finger fold; that stretch reads CENCETLIYKKSLLEQKGVCAEC. Residues 445–700 form the CoA carboxyltransferase N-terminal domain; the sequence is KKGRDTKDTE…ETIEIYMYGD (256 aa).

It belongs to the AccD/PCCB family. Acetyl-CoA carboxylase is a heterohexamer composed of biotin carboxyl carrier protein, biotin carboxylase and 2 subunits each of ACCase subunit alpha and ACCase plastid-coded subunit beta (accD). The cofactor is Zn(2+).

The protein resides in the plastid. It localises to the chloroplast stroma. The catalysed reaction is N(6)-carboxybiotinyl-L-lysyl-[protein] + acetyl-CoA = N(6)-biotinyl-L-lysyl-[protein] + malonyl-CoA. Its pathway is lipid metabolism; malonyl-CoA biosynthesis; malonyl-CoA from acetyl-CoA: step 1/1. Functionally, component of the acetyl coenzyme A carboxylase (ACC) complex. Biotin carboxylase (BC) catalyzes the carboxylation of biotin on its carrier protein (BCCP) and then the CO(2) group is transferred by the transcarboxylase to acetyl-CoA to form malonyl-CoA. This Cryptomeria japonica (Japanese cedar) protein is Acetyl-coenzyme A carboxylase carboxyl transferase subunit beta, chloroplastic.